Reading from the N-terminus, the 268-residue chain is Homeobox protein Hox-D12 (268 aa).

Residues 102 to 124 are disordered; sequence TPDAPTASEERSRTRPPFAPESS. Residues 200–259 constitute a DNA-binding region (homeobox); the sequence is ARKKRKPYTKQQIAELENEFLVNEFINRQKRKELSNRLNLSDQQVKIWFQNRRMKKKRVV.

This sequence belongs to the Abd-B homeobox family.

The protein localises to the nucleus. Functionally, sequence-specific transcription factor which is part of a developmental regulatory system that provides cells with specific positional identities on the anterior-posterior axis. The protein is Homeobox protein Hox-D12 (Hoxd12) of Mus musculus (Mouse).